A 440-amino-acid polypeptide reads, in one-letter code: Cell division protein FtsA (440 aa).

Residues 396 to 440 form a disordered region; that stretch reads VSSSEEQEQHHHQNEVQQRPKGKQKTQAEHNKQSKMKKLLSMFWE.

The protein belongs to the FtsA/MreB family. In terms of assembly, homodimer. Interacts with FtsZ.

It is found in the cell membrane. Cell division protein that is required for the assembly of the Z ring. May serve as a membrane anchor for the Z ring. Binds and hydrolyzes ATP. Also involved in sporulation. The protein is Cell division protein FtsA of Bacillus subtilis (strain 168).